The following is a 375-amino-acid chain: Succinyl-diaminopimelate desuccinylase (375 aa).

Zn(2+) is bound at residue histidine 66. Aspartate 68 is an active-site residue. Residue aspartate 99 coordinates Zn(2+). The Proton acceptor role is filled by glutamate 133. Positions 134, 162, and 348 each coordinate Zn(2+).

Belongs to the peptidase M20A family. DapE subfamily. As to quaternary structure, homodimer. Requires Zn(2+) as cofactor. It depends on Co(2+) as a cofactor.

The catalysed reaction is N-succinyl-(2S,6S)-2,6-diaminopimelate + H2O = (2S,6S)-2,6-diaminopimelate + succinate. It functions in the pathway amino-acid biosynthesis; L-lysine biosynthesis via DAP pathway; LL-2,6-diaminopimelate from (S)-tetrahydrodipicolinate (succinylase route): step 3/3. Its function is as follows. Catalyzes the hydrolysis of N-succinyl-L,L-diaminopimelic acid (SDAP), forming succinate and LL-2,6-diaminopimelate (DAP), an intermediate involved in the bacterial biosynthesis of lysine and meso-diaminopimelic acid, an essential component of bacterial cell walls. In Escherichia coli O7:K1 (strain IAI39 / ExPEC), this protein is Succinyl-diaminopimelate desuccinylase.